The chain runs to 656 residues: Solute carrier family 5 member 4A (656 aa).

Residues Met1–Asp28 are Cytoplasmic-facing. A helical membrane pass occupies residues Ile29–Met47. Residues Leu48–Ser64 are Extracellular-facing. A helical transmembrane segment spans residues Met65–Val85. The Cytoplasmic portion of the chain corresponds to Gly86–Ser105. Residues Phe106–Met126 form a helical membrane-spanning segment. Residues Thr127–Leu171 lie on the Extracellular side of the membrane. Residues Ala172–Phe191 form a helical membrane-spanning segment. Topologically, residues Thr192 to Ala208 are cytoplasmic. The chain crosses the membrane as a helical span at residues Val209 to Tyr229. At Glu230 to Val270 the chain is on the extracellular side. An N-linked (GlcNAc...) asparagine glycan is attached at Asn248. A helical membrane pass occupies residues Thr271–Trp291. Residues Cys292–Cys314 are Cytoplasmic-facing. Residues Ile315–Ile334 form a helical membrane-spanning segment. At Ser335–Leu423 the chain is on the extracellular side. The chain crosses the membrane as a helical span at residues Ile424–Ile443. Over Val444–Tyr455 the chain is Cytoplasmic. Residues Thr456 to Phe476 form a helical membrane-spanning segment. The Extracellular portion of the chain corresponds to Cys477 to Tyr526. Residues Leu527–Leu547 traverse the membrane as a helical segment. Over Thr548–Arg634 the chain is Cytoplasmic. The disordered stretch occupies residues Asp574–Glu593. Residues Thr635–Phe655 traverse the membrane as a helical segment.

This sequence belongs to the sodium:solute symporter (SSF) (TC 2.A.21) family. Expressed in small intestine. Expressed in kidney.

It is found in the cell membrane. Not inhibited by phlorizin. In terms of biological role, does not function as sodium/D-glucose symporter. Generates D-glucose-induced depolarization in a pH-dependent manner, with activity in acidic conditions (pH 5) but not neutral conditions. This chain is Solute carrier family 5 member 4A, found in Mus musculus (Mouse).